The following is a 261-amino-acid chain: Cytochrome c oxidase subunit 3 (261 aa).

Residues 1–15 (MTHQTHAYHMVNPSP) are Mitochondrial matrix-facing. The helical transmembrane segment at 16-34 (WPLTGALSALLMTSGLIMW) threads the bilayer. Residues 35–40 (FHFNST) are Mitochondrial intermembrane-facing. A helical transmembrane segment spans residues 41-66 (TLLMLGLTTNMLTMYQWWRDIIREST). Over 67–72 (FQGHHT) the chain is Mitochondrial matrix. Residues 73-105 (PSVQKGLRYGMILFIISEVLFFTGFFWAFYHSS) traverse the membrane as a helical segment. Residues 106–128 (LAPTPELGGCWPPTGIHPLNPLE) lie on the Mitochondrial intermembrane side of the membrane. The chain crosses the membrane as a helical span at residues 129–152 (VPLLNTSVLLASGVSITWAHHSLM). The Mitochondrial matrix segment spans residues 153 to 155 (EGN). A helical transmembrane segment spans residues 156–183 (RNHMLQALFITIALGVYFTLLQASEYYE). Residues 184 to 190 (APFTISD) lie on the Mitochondrial intermembrane side of the membrane. A helical transmembrane segment spans residues 191–223 (GVYGSTFFVATGFHGLHVIIGSTFLIVCFFRQL). The Mitochondrial matrix portion of the chain corresponds to 224 to 232 (KFHFTSNHH). A helical membrane pass occupies residues 233-256 (FGFEAAAWYWHFVDVVWLFLYVSI). Residues 257 to 261 (YWWGS) lie on the Mitochondrial intermembrane side of the membrane.

It belongs to the cytochrome c oxidase subunit 3 family. As to quaternary structure, component of the cytochrome c oxidase (complex IV, CIV), a multisubunit enzyme composed of 14 subunits. The complex is composed of a catalytic core of 3 subunits MT-CO1, MT-CO2 and MT-CO3, encoded in the mitochondrial DNA, and 11 supernumerary subunits COX4I, COX5A, COX5B, COX6A, COX6B, COX6C, COX7A, COX7B, COX7C, COX8 and NDUFA4, which are encoded in the nuclear genome. The complex exists as a monomer or a dimer and forms supercomplexes (SCs) in the inner mitochondrial membrane with NADH-ubiquinone oxidoreductase (complex I, CI) and ubiquinol-cytochrome c oxidoreductase (cytochrome b-c1 complex, complex III, CIII), resulting in different assemblies (supercomplex SCI(1)III(2)IV(1) and megacomplex MCI(2)III(2)IV(2)).

It is found in the mitochondrion inner membrane. It catalyses the reaction 4 Fe(II)-[cytochrome c] + O2 + 8 H(+)(in) = 4 Fe(III)-[cytochrome c] + 2 H2O + 4 H(+)(out). In terms of biological role, component of the cytochrome c oxidase, the last enzyme in the mitochondrial electron transport chain which drives oxidative phosphorylation. The respiratory chain contains 3 multisubunit complexes succinate dehydrogenase (complex II, CII), ubiquinol-cytochrome c oxidoreductase (cytochrome b-c1 complex, complex III, CIII) and cytochrome c oxidase (complex IV, CIV), that cooperate to transfer electrons derived from NADH and succinate to molecular oxygen, creating an electrochemical gradient over the inner membrane that drives transmembrane transport and the ATP synthase. Cytochrome c oxidase is the component of the respiratory chain that catalyzes the reduction of oxygen to water. Electrons originating from reduced cytochrome c in the intermembrane space (IMS) are transferred via the dinuclear copper A center (CU(A)) of subunit 2 and heme A of subunit 1 to the active site in subunit 1, a binuclear center (BNC) formed by heme A3 and copper B (CU(B)). The BNC reduces molecular oxygen to 2 water molecules using 4 electrons from cytochrome c in the IMS and 4 protons from the mitochondrial matrix. This Pelea capreolus (Gray rhebok) protein is Cytochrome c oxidase subunit 3 (MT-CO3).